Consider the following 262-residue polypeptide: NADP-dependent mannitol dehydrogenase (262 aa).

4 residues coordinate NADP(+): Ile-23, Asp-69, Asn-96, and Arg-129. Ser-149 serves as the catalytic Proton donor. Residues Tyr-169, Lys-173, Val-202, Thr-204, and Gln-206 each coordinate NADP(+). Residue Tyr-169 is the Proton acceptor of the active site. The active-site Lowers pKa of active site Tyr is Lys-173.

Belongs to the short-chain dehydrogenases/reductases (SDR) family. As to quaternary structure, homotetramer.

The catalysed reaction is D-mannitol + NADP(+) = D-fructose + NADPH + H(+). The polypeptide is NADP-dependent mannitol dehydrogenase (mtdH) (Agaricus bisporus (White button mushroom)).